A 208-amino-acid chain; its full sequence is Redox-sensing transcriptional repressor Rex (208 aa).

Positions 16-55 (LYYRCLSELNEKGEDKVSSAVLERLLKIDAATVRRDFSYF) form a DNA-binding region, H-T-H motif. 90 to 95 (GVGNLG) serves as a coordination point for NAD(+).

This sequence belongs to the transcriptional regulatory Rex family. In terms of assembly, homodimer.

The protein localises to the cytoplasm. In terms of biological role, modulates transcription in response to changes in cellular NADH/NAD(+) redox state. In Pediococcus pentosaceus (strain ATCC 25745 / CCUG 21536 / LMG 10740 / 183-1w), this protein is Redox-sensing transcriptional repressor Rex.